Reading from the N-terminus, the 716-residue chain is Fatty acid oxidation complex subunit alpha (716 aa).

The tract at residues 1 to 189 (MIYQSPTIQV…KVGAIDAVVA (189 aa)) is enoyl-CoA hydratase/isomerase. D296 provides a ligand contact to substrate. The 3-hydroxyacyl-CoA dehydrogenase stretch occupies residues 311-716 (KDVNQAAVLG…AANNGSYYQA (406 aa)). NAD(+)-binding positions include M324, D343, 400–402 (VVE), K407, and S429. H450 functions as the For 3-hydroxyacyl-CoA dehydrogenase activity in the catalytic mechanism. N453 provides a ligand contact to NAD(+). N500 and Y660 together coordinate substrate.

The protein in the N-terminal section; belongs to the enoyl-CoA hydratase/isomerase family. This sequence in the C-terminal section; belongs to the 3-hydroxyacyl-CoA dehydrogenase family. Heterotetramer of two alpha chains (FadB) and two beta chains (FadA).

The catalysed reaction is a (3S)-3-hydroxyacyl-CoA + NAD(+) = a 3-oxoacyl-CoA + NADH + H(+). It carries out the reaction a (3S)-3-hydroxyacyl-CoA = a (2E)-enoyl-CoA + H2O. The enzyme catalyses a 4-saturated-(3S)-3-hydroxyacyl-CoA = a (3E)-enoyl-CoA + H2O. It catalyses the reaction (3S)-3-hydroxybutanoyl-CoA = (3R)-3-hydroxybutanoyl-CoA. The catalysed reaction is a (3Z)-enoyl-CoA = a 4-saturated (2E)-enoyl-CoA. It carries out the reaction a (3E)-enoyl-CoA = a 4-saturated (2E)-enoyl-CoA. It participates in lipid metabolism; fatty acid beta-oxidation. In terms of biological role, involved in the aerobic and anaerobic degradation of long-chain fatty acids via beta-oxidation cycle. Catalyzes the formation of 3-oxoacyl-CoA from enoyl-CoA via L-3-hydroxyacyl-CoA. It can also use D-3-hydroxyacyl-CoA and cis-3-enoyl-CoA as substrate. This chain is Fatty acid oxidation complex subunit alpha, found in Shewanella frigidimarina (strain NCIMB 400).